Consider the following 309-residue polypeptide: Small ribosomal subunit biogenesis GTPase RsgA (309 aa).

The CP-type G domain maps to 88–247; sequence KNLITRPPVA…IADTPGFNKP (160 aa). GTP-binding positions include 137-140 and 189-197; these read TKRD and GPSGVGKSS. Residues Cys272, Cys277, His279, and Cys285 each contribute to the Zn(2+) site.

Belongs to the TRAFAC class YlqF/YawG GTPase family. RsgA subfamily. In terms of assembly, monomer. Associates with 30S ribosomal subunit, binds 16S rRNA. Zn(2+) serves as cofactor.

Its subcellular location is the cytoplasm. One of several proteins that assist in the late maturation steps of the functional core of the 30S ribosomal subunit. Helps release RbfA from mature subunits. May play a role in the assembly of ribosomal proteins into the subunit. Circularly permuted GTPase that catalyzes slow GTP hydrolysis, GTPase activity is stimulated by the 30S ribosomal subunit. In Prochlorococcus marinus (strain SARG / CCMP1375 / SS120), this protein is Small ribosomal subunit biogenesis GTPase RsgA.